The sequence spans 237 residues: Putative biotin ligase (237 aa).

Positions 1–191 (MEIIHLSEID…KKYKKYSITI (191 aa)) constitute a BPL/LPL catalytic domain.

It belongs to the biotin--protein ligase family.

The catalysed reaction is biotin + L-lysyl-[protein] + ATP = N(6)-biotinyl-L-lysyl-[protein] + AMP + diphosphate + H(+). In Methanocaldococcus jannaschii (strain ATCC 43067 / DSM 2661 / JAL-1 / JCM 10045 / NBRC 100440) (Methanococcus jannaschii), this protein is Putative biotin ligase.